The primary structure comprises 469 residues: Phosphatidylcholine:ceramide cholinephosphotransferase 1 (469 aa).

A disordered region spans residues 40-177 (TTKIGPKLET…GDKPASPHDR (138 aa)). Composition is skewed to basic and acidic residues over residues 72-91 (AAEK…HEET), 100-117 (SHHD…GDGK), and 162-177 (VRLE…PHDR). The next 6 membrane-spanning stretches (helical) occupy residues 186 to 206 (LVAF…LSWI), 231 to 251 (LRLC…LILF), 262 to 282 (LCFI…VTPV), 300 to 320 (TFSL…LNLF), 327 to 347 (LCGD…ALFI), and 355 to 375 (FYIL…FLVL). The active site involves His336. Residues 376-469 (SHGHYTIDVI…RNGAARPAFE (94 aa)) lie on the Cytoplasmic side of the membrane. Active-site residues include His379 and Asp383.

It belongs to the sphingomyelin synthase family.

It is found in the golgi apparatus membrane. The catalysed reaction is an N-acylsphing-4-enine + a 1,2-diacyl-sn-glycero-3-phosphocholine = a sphingomyelin + a 1,2-diacyl-sn-glycerol. The enzyme catalyses an N-acyl-15-methylhexadecasphing-4-enine + a 1,2-diacyl-sn-glycero-3-phosphocholine = an N-acyl-15-methylhexadecasphing-4-enine-1-phosphocholine + a 1,2-diacyl-sn-glycerol. It functions in the pathway lipid metabolism; sphingolipid metabolism. Its function is as follows. Sphingomyelin synthases (SM synthase or SMS) synthesize the sphingolipid sphingomyelin (SM) through transfer of the phosphatidyl head group of 1,2-diacyl-sn-glycero-3-phosphocholine (phosphatidylcholine, PC) on to the primary hydroxyl of ceramide (N-acylsphingoid base), yielding 1,2-diacyl-sn-glycerol (diacylglycerol, DAG) as a side product. Functions as a bidirectional lipid cholinephosphotransferases capable of converting PC and ceramide to SM and DAG and vice versa depending on the respective levels of ceramide and DAG as phosphocholine acceptors, respectively. The sequence is that of Phosphatidylcholine:ceramide cholinephosphotransferase 1 (sms-1) from Caenorhabditis elegans.